The primary structure comprises 557 residues: Formate--tetrahydrofolate ligase (557 aa).

Residue 67–74 (TPAGEGKT) participates in ATP binding.

It belongs to the formate--tetrahydrofolate ligase family.

The enzyme catalyses (6S)-5,6,7,8-tetrahydrofolate + formate + ATP = (6R)-10-formyltetrahydrofolate + ADP + phosphate. The protein operates within one-carbon metabolism; tetrahydrofolate interconversion. This Cereibacter sphaeroides (strain KD131 / KCTC 12085) (Rhodobacter sphaeroides) protein is Formate--tetrahydrofolate ligase.